Here is a 629-residue protein sequence, read N- to C-terminus: tRNA uridine 5-carboxymethylaminomethyl modification enzyme MnmG (629 aa).

FAD is bound at residue 13 to 18 (GGGHAG). NAD(+) is bound at residue 273–287 (GPRYCPSIEDKIVRF).

This sequence belongs to the MnmG family. In terms of assembly, homodimer. Heterotetramer of two MnmE and two MnmG subunits. Requires FAD as cofactor.

It is found in the cytoplasm. In terms of biological role, NAD-binding protein involved in the addition of a carboxymethylaminomethyl (cmnm) group at the wobble position (U34) of certain tRNAs, forming tRNA-cmnm(5)s(2)U34. The protein is tRNA uridine 5-carboxymethylaminomethyl modification enzyme MnmG of Marinomonas sp. (strain MWYL1).